Consider the following 150-residue polypeptide: 16.6 kDa heat shock protein (150 aa).

A sHSP domain is found at 31–150; it reads AERCPVLTNV…PQLKAIPISG (120 aa).

This sequence belongs to the small heat shock protein (HSP20) family. In terms of assembly, may form oligomeric structures.

Its subcellular location is the cytoplasm. This chain is 16.6 kDa heat shock protein (HSP16.6), found in Oryza sativa subsp. japonica (Rice).